We begin with the raw amino-acid sequence, 807 residues long: Glycerol-3-phosphate acyltransferase (807 aa).

The short motif at 308-313 is the HXXXXD motif element; it reads CHRSHM.

Belongs to the GPAT/DAPAT family.

It is found in the cell inner membrane. It carries out the reaction sn-glycerol 3-phosphate + an acyl-CoA = a 1-acyl-sn-glycero-3-phosphate + CoA. Its pathway is phospholipid metabolism; CDP-diacylglycerol biosynthesis; CDP-diacylglycerol from sn-glycerol 3-phosphate: step 1/3. The chain is Glycerol-3-phosphate acyltransferase from Shewanella sp. (strain MR-4).